We begin with the raw amino-acid sequence, 161 residues long: Protein-export protein SecB (161 aa).

Belongs to the SecB family. In terms of assembly, homotetramer, a dimer of dimers. One homotetramer interacts with 1 SecA dimer.

It localises to the cytoplasm. In terms of biological role, one of the proteins required for the normal export of preproteins out of the cell cytoplasm. It is a molecular chaperone that binds to a subset of precursor proteins, maintaining them in a translocation-competent state. It also specifically binds to its receptor SecA. The polypeptide is Protein-export protein SecB (Shewanella sp. (strain MR-7)).